A 102-amino-acid chain; its full sequence is MVVGIAHYLTVSAVLFTLGVFGIFLNRKNVIVILMSVELILLAVNINFVAFSAALGDLVGQVFALFVLTVAAAEAAIGLAILVVFFRNRGSIAVEDVNMMKG.

The next 3 helical transmembrane spans lie at 5–25 (IAHYLTVSAVLFTLGVFGIFL), 31–51 (IVILMSVELILLAVNINFVAF), and 66–86 (FVLTVAAAEAAIGLAILVVFF).

The protein belongs to the complex I subunit 4L family. NDH-1 is composed of 14 different subunits. Subunits NuoA, H, J, K, L, M, N constitute the membrane sector of the complex.

It is found in the cell inner membrane. It catalyses the reaction a quinone + NADH + 5 H(+)(in) = a quinol + NAD(+) + 4 H(+)(out). NDH-1 shuttles electrons from NADH, via FMN and iron-sulfur (Fe-S) centers, to quinones in the respiratory chain. The immediate electron acceptor for the enzyme in this species is believed to be ubiquinone. Couples the redox reaction to proton translocation (for every two electrons transferred, four hydrogen ions are translocated across the cytoplasmic membrane), and thus conserves the redox energy in a proton gradient. This chain is NADH-quinone oxidoreductase subunit K, found in Mesorhizobium japonicum (strain LMG 29417 / CECT 9101 / MAFF 303099) (Mesorhizobium loti (strain MAFF 303099)).